The primary structure comprises 178 residues: Ribosome maturation factor RimM (178 aa).

In terms of domain architecture, PRC barrel spans 94–174 (KNEFFWFDLI…RIDVINSFDI (81 aa)).

Belongs to the RimM family. In terms of assembly, binds ribosomal protein uS19.

It localises to the cytoplasm. In terms of biological role, an accessory protein needed during the final step in the assembly of 30S ribosomal subunit, possibly for assembly of the head region. Essential for efficient processing of 16S rRNA. May be needed both before and after RbfA during the maturation of 16S rRNA. It has affinity for free ribosomal 30S subunits but not for 70S ribosomes. The polypeptide is Ribosome maturation factor RimM (Aliarcobacter butzleri (strain RM4018) (Arcobacter butzleri)).